The following is a 619-amino-acid chain: MKLARKIKNRLFRSKKKTQKENTAVIVHPADNRVFSLFDKTKRIEENQQVPVRKISEFSWNGSILKIAGYMYIKGLPLQKEDQVRKRLLLVNNGVLFTAVSLRDIPVDQLSIDTSNVPGAYKWAGFSQQINFSKLMNDKPLPQGEYKLFLEIEAVDDQNVKHQEVHTVGNVSNFLSNDVYATKMEFHSAKKLMKFNLIVNYDEGEKTINLSCNKLQEIDPSLLELDTGKEANRFIRKLNTSLFHFAYDVFRLLPIKSNKIVFASDSRLDVTGNFEFVYEELLKREENFDFKFFLKSSIRDRKSLSELMSMAYHFATSKIIFIDDFYPIIYPLKIRKNADLVQLWHAVGAFKTFGYSRIGLPGGPSPHSKNHRNYTKVIVSSENIRKHYAEGFGVDIENVIATGVPRTDFFFDEAKKAFVKERLYTEYPFLKDKKVILFAPTFRGNGQQSAHYPFEVLDFDRLYRELKDEYIFLFKIHPFVRNDANIPYQYSDFFYDFSSFREINELLLVTDVLITDYSSVCFEYALLNKPMIFFSYDVDDYIRKRDFYYDYFDFIPGPLAKTSDQMISIIKEEKYNFEQIDSFVHYFFDDLDGKASERVVDQIVFPQEEEPVDDKVLKR.

It belongs to the CDP-glycerol glycerophosphotransferase family.

Its subcellular location is the cell membrane. The catalysed reaction is 4-O-[1-D-ribitylphospho-(2R)-1-glycerylphospho]-N-acetyl-beta-D-mannosaminyl-(1-&gt;4)-N-acetyl-alpha-D-glucosaminyl di-trans,octa-cis-undecaprenyl diphosphate + n CDP-L-ribitol = 4-O-[(D-ribitylphospho)(n)-D-ribitylphospho-(2R)-glycerylphospho]-N-acetyl-beta-D-mannosaminyl-(1-&gt;4)-N-acetyl-alpha-D-glucosaminyl di-trans,octa-cis-undecaprenyl diphosphate + n CMP + n H(+). It participates in cell wall biogenesis; poly(ribitol phosphate) teichoic acid biosynthesis. Its function is as follows. Responsible for the polymerization of the main chain of the major teichoic acid by sequential transfer of ribitol phosphate units from CDP-ribitol to the glycerol phosphate attached to the disaccharide linkage unit. Synthesizes polymers of up to 40 ribitol phosphate units in length. The protein is Teichoic acid poly(ribitol-phosphate) polymerase (tarL) of Bacillus spizizenii (strain ATCC 23059 / NRRL B-14472 / W23) (Bacillus subtilis subsp. spizizenii).